The chain runs to 238 residues: 1-(5-phosphoribosyl)-5-[(5-phosphoribosylamino)methylideneamino] imidazole-4-carboxamide isomerase (238 aa).

Asp7 functions as the Proton acceptor in the catalytic mechanism. Asp129 serves as the catalytic Proton donor.

It belongs to the HisA/HisF family.

Its subcellular location is the cytoplasm. It carries out the reaction 1-(5-phospho-beta-D-ribosyl)-5-[(5-phospho-beta-D-ribosylamino)methylideneamino]imidazole-4-carboxamide = 5-[(5-phospho-1-deoxy-D-ribulos-1-ylimino)methylamino]-1-(5-phospho-beta-D-ribosyl)imidazole-4-carboxamide. Its pathway is amino-acid biosynthesis; L-histidine biosynthesis; L-histidine from 5-phospho-alpha-D-ribose 1-diphosphate: step 4/9. This Leuconostoc mesenteroides subsp. mesenteroides (strain ATCC 8293 / DSM 20343 / BCRC 11652 / CCM 1803 / JCM 6124 / NCDO 523 / NBRC 100496 / NCIMB 8023 / NCTC 12954 / NRRL B-1118 / 37Y) protein is 1-(5-phosphoribosyl)-5-[(5-phosphoribosylamino)methylideneamino] imidazole-4-carboxamide isomerase.